Reading from the N-terminus, the 252-residue chain is 5'-nucleotidase SurE (252 aa).

4 residues coordinate a divalent metal cation: D8, D9, S40, and N93.

This sequence belongs to the SurE nucleotidase family. A divalent metal cation is required as a cofactor.

The protein localises to the cytoplasm. It carries out the reaction a ribonucleoside 5'-phosphate + H2O = a ribonucleoside + phosphate. Functionally, nucleotidase that shows phosphatase activity on nucleoside 5'-monophosphates. The sequence is that of 5'-nucleotidase SurE from Erythrobacter litoralis (strain HTCC2594).